The primary structure comprises 239 residues: Transmembrane emp24 domain-containing protein 6 (239 aa).

Positions 1 to 21 (MFPLLLVAELVVLSLVTSVKS) are cleaved as a signal peptide. At 22–200 (QETDPLHGSK…FFLLQSNYTY (179 aa)) the chain is on the lumenal side. Residues 53-138 (IECFWQFADQ…SIQVYLNFGV (86 aa)) form the GOLD domain. N-linked (GlcNAc...) asparagine glycosylation is found at Asn-156 and Asn-197. The chain crosses the membrane as a helical span at residues 201 to 223 (VNWWSTAQSLAIVLSGALQLYFL). The Cytoplasmic portion of the chain corresponds to 224–239 (KRLFTASTTDTKKPRC).

The protein belongs to the EMP24/GP25L family.

It localises to the endoplasmic reticulum membrane. The sequence is that of Transmembrane emp24 domain-containing protein 6 (Tmed6) from Mus musculus (Mouse).